The primary structure comprises 228 residues: MQFQHPHAPLYAPAPAPPAHPTPFYIEDILGRTGSSSGPVVPTPTLPSPNSSFTSLIPSYRTPIYELTPIHPVLSQYASMYPFQRSVGDFAHALIRHDPLGKPLLWSPFIQRPLHKRKGGQVRFSNDQTIELEKKFETQKYLSPPERKRLAKMLQLSERQVKTWFQNRRAKWRRLKQENPPSTGKREAEDSDTRRLSDAAARARELESGASTDSEELLDIEDEHQFTL.

Positions 117–176 form a DNA-binding region, homeobox; the sequence is RKGGQVRFSNDQTIELEKKFETQKYLSPPERKRLAKMLQLSERQVKTWFQNRRAKWRRLK. Residues 175–228 form a disordered region; it reads LKQENPPSTGKREAEDSDTRRLSDAAARARELESGASTDSEELLDIEDEHQFTL. Over residues 184–207 the composition is skewed to basic and acidic residues; the sequence is GKREAEDSDTRRLSDAAARARELE. The span at 213–222 shows a compositional bias: acidic residues; the sequence is DSEELLDIED.

As to expression, expressed in embryonic endothelial and blood lineages. From late-blastula stage, expression is restricted to the dorsal marginal region of the extraembryonic yolk syncytial layer (YSL). By the onset of gastrulation, expressed in the entire dorsal half of the YSL. Post-gastrulation, expression appears in both anterior and posterior lateral plate mesoderm by the 3-somite stage. Posteriorly, expression is in the intermediate cell mass (ICM), which contains both endothelial and blood precursors. Subsequently expressed in the developing endothelial cells including the endocardium until the onset of circulation (24 hpf) and disappears completely by 30 hpf, at which point expression is seen in the thyroid and liver primordia. Also expressed in the developing biliary tree and pancreas.

It is found in the nucleus. In terms of biological role, recognizes the DNA sequence 5'-ATTAA-3'. Transcriptional repressor. Regulates the differentiation of both endothelial and blood cells. Plays a role in embryonic dorsoventral patterning by regulating bmp expression. May establish anterior identity. Functions in the embryo to regulate liver development. Functions extraembryonically to generate organ chirality. The sequence is that of Hematopoietically-expressed homeobox protein hhex from Danio rerio (Zebrafish).